The chain runs to 70 residues: Dermaseptin-PH (70 aa).

The N-terminal stretch at 1 to 22 (MDILKKSLFLILFLGVVSLSIC) is a signal peptide. A propeptide spanning residues 23-44 (EEEKRENEEEMEQDDEQSEMKR) is cleaved from the precursor. A Glutamine amide modification is found at Q67. The propeptide occupies 68-70 (GGQ).

It belongs to the frog skin active peptide (FSAP) family. In terms of tissue distribution, expressed by the skin glands.

The protein localises to the secreted. The protein resides in the target cell membrane. Antimicrobial peptide which inhibits the growth of Gram-negative (MIC=16-64 uM) and Gram-positive bacteria (MIC=32 uM), and pathogenic yeast Candida albicans (MIC=16 uM). Shows a broad-spectrum of anticancer activities against several cancer cell lines. Also shows slight cytotoxicity on human dermal microvascular endothelium cells (IC(50)=4.85 uM). Induces low hemolysis against horse erythrocytes. The protein is Dermaseptin-PH of Pithecopus hypochondrialis (Orange-legged leaf frog).